The following is a 356-amino-acid chain: Chorismate synthase (356 aa).

NADP(+) contacts are provided by R48 and R54. FMN-binding positions include 125 to 127 (RSS), 237 to 238 (NA), G281, 296 to 300 (KPTSS), and R322.

Belongs to the chorismate synthase family. As to quaternary structure, homotetramer. It depends on FMNH2 as a cofactor.

The catalysed reaction is 5-O-(1-carboxyvinyl)-3-phosphoshikimate = chorismate + phosphate. The protein operates within metabolic intermediate biosynthesis; chorismate biosynthesis; chorismate from D-erythrose 4-phosphate and phosphoenolpyruvate: step 7/7. Its function is as follows. Catalyzes the anti-1,4-elimination of the C-3 phosphate and the C-6 proR hydrogen from 5-enolpyruvylshikimate-3-phosphate (EPSP) to yield chorismate, which is the branch point compound that serves as the starting substrate for the three terminal pathways of aromatic amino acid biosynthesis. This reaction introduces a second double bond into the aromatic ring system. The polypeptide is Chorismate synthase (Novosphingobium aromaticivorans (strain ATCC 700278 / DSM 12444 / CCUG 56034 / CIP 105152 / NBRC 16084 / F199)).